The primary structure comprises 452 residues: Regulator of nonsense transcripts 3A (452 aa).

Composition is skewed to basic and acidic residues over residues 205–363 (RIRE…DRAK) and 376–401 (TGDK…KDRP). Positions 205–452 (RIREEKREER…GTGSEKSADE (248 aa)) are disordered.

This sequence belongs to the RENT3 family.

It localises to the nucleus. Its subcellular location is the cytoplasm. Involved in nonsense-mediated decay (NMD) of mRNAs containing premature stop codons by associating with the nuclear exon junction complex (EJC) and serving as link between the EJC core and NMD machinery. Recruits UPF2 at the cytoplasmic side of the nuclear envelope and the subsequent formation of an UPF1-UPF2-UPF3 surveillance complex (including UPF1 bound to release factors at the stalled ribosome) is believed to activate NMD. Binds spliced mRNA upstream of exon-exon junctions. This is Regulator of nonsense transcripts 3A from Danio rerio (Zebrafish).